Reading from the N-terminus, the 57-residue chain is Large ribosomal subunit protein bL32c (57 aa).

Belongs to the bacterial ribosomal protein bL32 family.

The protein resides in the plastid. Its subcellular location is the chloroplast. This Liriodendron tulipifera (Tuliptree) protein is Large ribosomal subunit protein bL32c.